We begin with the raw amino-acid sequence, 186 residues long: NADH-quinone oxidoreductase subunit I (186 aa).

4Fe-4S ferredoxin-type domains are found at residues 70-100 (LTTRADGKVQCVSCNMCATVCPAYCIEIQSA) and 113-142 (DRFEIDYSRCIFCGFCVEACPEDAIRMSKD). [4Fe-4S] cluster-binding residues include cysteine 80, cysteine 83, cysteine 86, cysteine 90, cysteine 122, cysteine 125, cysteine 128, and cysteine 132.

Belongs to the complex I 23 kDa subunit family. As to quaternary structure, NDH-1 is composed of 14 different subunits. Subunits NuoA, H, J, K, L, M, N constitute the membrane sector of the complex. The cofactor is [4Fe-4S] cluster.

The protein localises to the cell inner membrane. The enzyme catalyses a quinone + NADH + 5 H(+)(in) = a quinol + NAD(+) + 4 H(+)(out). Functionally, NDH-1 shuttles electrons from NADH, via FMN and iron-sulfur (Fe-S) centers, to quinones in the respiratory chain. The immediate electron acceptor for the enzyme in this species is believed to be ubiquinone. Couples the redox reaction to proton translocation (for every two electrons transferred, four hydrogen ions are translocated across the cytoplasmic membrane), and thus conserves the redox energy in a proton gradient. The protein is NADH-quinone oxidoreductase subunit I of Pelobacter propionicus (strain DSM 2379 / NBRC 103807 / OttBd1).